Here is a 143-residue protein sequence, read N- to C-terminus: Transcriptional regulator SlyA (143 aa).

Residues 2-135 enclose the HTH marR-type domain; the sequence is ESTLGSDLAR…LSTLVQKLEQ (134 aa). A DNA-binding region (H-T-H motif) is located at residues 49-72; the sequence is QIQLAKAIGIEQPSLVRTLDQLEE.

This sequence belongs to the SlyA family. Homodimer.

Transcription regulator that can specifically activate or repress expression of target genes. Regulates the cpm operon, which contains cpmA, cpmB, cpmC, cpmD, cpmE, cpmF, cpmG and cpmH, involved in carbapenem-like antibiotic production. The polypeptide is Transcriptional regulator SlyA (Photorhabdus laumondii subsp. laumondii (strain DSM 15139 / CIP 105565 / TT01) (Photorhabdus luminescens subsp. laumondii)).